The chain runs to 402 residues: Multidrug resistance protein MdtH (402 aa).

Residues 1–12 (MSRVSQARNLGK) are Cytoplasmic-facing. A helical membrane pass occupies residues 13-33 (YFLLIDNMLVVLGFFVVFPLI). Residues 34–98 (SIRFVDQMGW…GFATMGIAHE (65 aa)) are Periplasmic-facing. The chain crosses the membrane as a helical span at residues 99–116 (PWLLWFSCLLSGLGGTLF). The Cytoplasmic portion of the chain corresponds to 117–138 (DPPRSALVVKLIRPQQRGRFFS). Residues 139 to 159 (LLMMQDSASAVIGALLGSWLL) traverse the membrane as a helical segment. The Periplasmic portion of the chain corresponds to 160 to 164 (QYDFR). The chain crosses the membrane as a helical span at residues 165–185 (LVCATGAVLFVLCAAFNAWLL). The Cytoplasmic portion of the chain corresponds to 186–213 (PAWKLSTVRTPVREGMTRVMRDKRFVTY). A helical membrane pass occupies residues 214–234 (VLTLAGYYMLAVQVMLMLPIM). The Periplasmic portion of the chain corresponds to 235-243 (VNDVAGAPS). A helical membrane pass occupies residues 244–264 (AVKWMYAIEACLSLTLLYPIA). At 265–276 (RWSEKHFRLEHR) the chain is on the cytoplasmic side. A helical transmembrane segment spans residues 277–297 (LMAGLLIMSLSMMPVGMVSGL). At 298 to 299 (QQ) the chain is on the periplasmic side. Residues 300–320 (LFTLICLFYIGSIIAEPARET) form a helical membrane-spanning segment. Residues 321 to 339 (LSASLADARARGSYMGFSR) are Cytoplasmic-facing. A helical membrane pass occupies residues 340 to 360 (LGLAIGGAIGYIGGGWLFDLG). Residues 361-367 (KSAHQPE) are Periplasmic-facing. Residues 368–388 (LPWMMLGIIGIFTFLALGWQF) form a helical membrane-spanning segment. Topologically, residues 389 to 402 (SQKRAARRLLERDA) are cytoplasmic.

Belongs to the major facilitator superfamily. DHA1 family. MdtH (TC 2.A.1.2.21) subfamily.

It localises to the cell inner membrane. This chain is Multidrug resistance protein MdtH, found in Shigella flexneri.